The chain runs to 101 residues: Small ribosomal subunit protein bS16 (101 aa).

Belongs to the bacterial ribosomal protein bS16 family.

The polypeptide is Small ribosomal subunit protein bS16 (Ureaplasma urealyticum serovar 10 (strain ATCC 33699 / Western)).